The chain runs to 566 residues: Amidophosphoribosyltransferase 1, chloroplastic (566 aa).

The segment covering 1-13 (MAATTSFSSSLSL) has biased composition (low complexity). Disordered regions lie at residues 1–28 (MAATTSFSSSLSLITKPNNSSYTNQPLP) and 58–87 (VSSYFSSPSPSEDNSHTPFDYHNDEDDEKP). A chloroplast-targeting transit peptide spans 1 to 58 (MAATTSFSSSLSLITKPNNSSYTNQPLPLFPKPFLKPPHLSLLPSPLSSPPPSLIHGV). A compositionally biased stretch (polar residues) spans 15–25 (TKPNNSSYTNQ). Positions 59 to 68 (SSYFSSPSPS) are enriched in low complexity. Residues 70 to 87 (DNSHTPFDYHNDEDDEKP) show a composition bias toward basic and acidic residues. The active-site Nucleophile is C91. The Glutamine amidotransferase type-2 domain maps to 91 to 311 (CGVVGIYGDP…PGEVLVVDKD (221 aa)). Residues C327, C473, C524, and C527 each contribute to the [4Fe-4S] cluster site.

This sequence in the C-terminal section; belongs to the purine/pyrimidine phosphoribosyltransferase family. Requires [4Fe-4S] cluster as cofactor. The cofactor is Mg(2+). In terms of tissue distribution, expressed in flowers and roots. Also present in leaves, and, to a lower extent, in cotyledons.

The protein localises to the plastid. Its subcellular location is the chloroplast stroma. The enzyme catalyses 5-phospho-beta-D-ribosylamine + L-glutamate + diphosphate = 5-phospho-alpha-D-ribose 1-diphosphate + L-glutamine + H2O. It functions in the pathway purine metabolism; IMP biosynthesis via de novo pathway; N(1)-(5-phospho-D-ribosyl)glycinamide from 5-phospho-alpha-D-ribose 1-diphosphate: step 1/2. Its function is as follows. Catalyzes the first committed step of 'de novo' purine biosynthesis from glutamine. Involved in plastid biogenesis and cell division. The protein is Amidophosphoribosyltransferase 1, chloroplastic (ASE1) of Arabidopsis thaliana (Mouse-ear cress).